Consider the following 332-residue polypeptide: D-xylose-binding periplasmic protein (332 aa).

An N-terminal signal peptide occupies residues 1-23 (MKIKSALLTLVGALTVFSSSAHS).

It belongs to the bacterial solute-binding protein 2 family.

Its subcellular location is the periplasm. Involved in the high-affinity D-xylose membrane transport system. Binds with high affinity to xylose. This chain is D-xylose-binding periplasmic protein (xylF), found in Haemophilus influenzae (strain ATCC 51907 / DSM 11121 / KW20 / Rd).